The following is a 370-amino-acid chain: Alpha-ketoglutarate-dependent dioxygenase cnsP (370 aa).

Over residues 1-12 (MSTTTVITPGTI) the composition is skewed to low complexity. Positions 1–20 (MSTTTVITPGTITREKNENG) are disordered. His-131 serves as a coordination point for substrate. The Fe cation site is built by His-169 and Asp-171. Thr-197 contributes to the 2-oxoglutarate binding site. His-321 serves as a coordination point for Fe cation. 2-oxoglutarate is bound by residues Arg-333 and Arg-337. Substrate is bound at residue Arg-337.

It belongs to the TfdA dioxygenase family. Fe(2+) serves as cofactor.

The protein operates within alkaloid biosynthesis. Its function is as follows. Alpha-ketoglutarate-dependent dioxygenase; part of the gene cluster that mediates the biosynthesis of communesins, a prominent class of indole alkaloids with great potential as pharmaceuticals. Communesins are biosynthesized by the coupling of tryptamine and aurantioclavine, two building blocks derived from L-tryptophan. The L-tryptophan decarboxylase cnsB converts L-tryptophan to tryptamine, whereas the tryptophan dimethylallyltransferase cnsF converts L-tryptophan to 4-dimethylallyl tryptophan which is further transformed to aurantioclavine by the aurantioclavine synthase cnsA, probably aided by the catalase cnsD. The cytochrome P450 monooxygenase cnsC catalyzes the heterodimeric coupling between the two different indole moieties, tryptamine and aurantioclavine, to construct vicinal quaternary stereocenters and yield the heptacyclic communesin scaffold. The O-methyltransferase cnsE then methylates the communesin scaffold to produce communesin K, the simplest characterized communesin that contains the heptacyclic core. The dioxygenase cnsJ converts communesin K into communesin I. Acylation to introduce the hexadienyl group at position N16 of communesin I by the acyltransferase cnsK leads to the production of communesin B. The hexadienyl group is produced by the highly reducing polyketide synthase cnsI, before being hydrolytically removed from cnsI by the serine hydrolase cnsH, converted into hexadienyl-CoA by the CoA ligase cnsG, and then transferred to communesin I by cnsK. Surprisingly, cnsK may also be a promiscuous acyltransferase that can tolerate a range of acyl groups, including acetyl-, propionyl-, and butyryl-CoA, which lead to communesins A, G and H respectively. The roles of the alpha-ketoglutarate-dependent dioxygenases cnsM and cnsP have still to be determined. The sequence is that of Alpha-ketoglutarate-dependent dioxygenase cnsP from Penicillium expansum (Blue mold rot fungus).